The primary structure comprises 750 residues: Photosystem I P700 chlorophyll a apoprotein A1 (750 aa).

8 helical membrane passes run 70–93 (VFSA…FHGA), 156–179 (LYCT…FHYH), 195–219 (LNHH…HVSL), 291–309 (IAHH…GHMY), 346–369 (WHAQ…HHMY), 385–411 (LSLF…IFMV), 433–455 (AIIS…LYIH), and 531–549 (FLVH…LILL). Positions 573 and 582 each coordinate [4Fe-4S] cluster. 2 consecutive transmembrane segments (helical) span residues 589 to 610 (HVFL…HFSW) and 664 to 686 (LSAY…MFLF). Chlorophyll a' is bound at residue histidine 675. Chlorophyll a contacts are provided by methionine 683 and tyrosine 691. Residue tryptophan 692 participates in phylloquinone binding. Residues 724-744 (AVGVTHYLLGGIATTWAFFLA) form a helical membrane-spanning segment.

This sequence belongs to the PsaA/PsaB family. The PsaA/B heterodimer binds the P700 chlorophyll special pair and subsequent electron acceptors. PSI consists of a core antenna complex that captures photons, and an electron transfer chain that converts photonic excitation into a charge separation. The eukaryotic PSI reaction center is composed of at least 11 subunits. Requires P700 is a chlorophyll a/chlorophyll a' dimer, A0 is one or more chlorophyll a, A1 is one or both phylloquinones and FX is a shared 4Fe-4S iron-sulfur center. as cofactor.

The protein localises to the plastid. It localises to the chloroplast thylakoid membrane. The catalysed reaction is reduced [plastocyanin] + hnu + oxidized [2Fe-2S]-[ferredoxin] = oxidized [plastocyanin] + reduced [2Fe-2S]-[ferredoxin]. In terms of biological role, psaA and PsaB bind P700, the primary electron donor of photosystem I (PSI), as well as the electron acceptors A0, A1 and FX. PSI is a plastocyanin-ferredoxin oxidoreductase, converting photonic excitation into a charge separation, which transfers an electron from the donor P700 chlorophyll pair to the spectroscopically characterized acceptors A0, A1, FX, FA and FB in turn. Oxidized P700 is reduced on the lumenal side of the thylakoid membrane by plastocyanin. The chain is Photosystem I P700 chlorophyll a apoprotein A1 from Arabis hirsuta (Hairy rock-cress).